The chain runs to 244 residues: MSFNLIVDQGNSACKVAFIRNNGIESISFLPGKAGQALSHLVAPHRFDKAIYSSVGLPDEEAEAIVRSCAAASLMMGTETPVPLRLQYDRRTLGADRLAAVVGAHSLYPNTELLVIDAGTAITYERVSAEGIYLGGNISPGLHLRFKALHLFTGRLPLIDPSGISPKIAEYGSSTEEAITAGVIHGLAGEIDRYIDDLHAKEGRSAVILTGGDANYLARIIRSGILIHPDLVLLGLNRILEYNV.

8 to 15 (DQGNSACK) is an ATP binding site. Position 94-97 (94-97 (GADR)) interacts with substrate. The Proton acceptor role is filled by D96. D117 is a K(+) binding site. T120 lines the ATP pocket. T175 provides a ligand contact to substrate.

It belongs to the type III pantothenate kinase family. As to quaternary structure, homodimer. NH4(+) serves as cofactor. K(+) is required as a cofactor.

It localises to the cytoplasm. It carries out the reaction (R)-pantothenate + ATP = (R)-4'-phosphopantothenate + ADP + H(+). It functions in the pathway cofactor biosynthesis; coenzyme A biosynthesis; CoA from (R)-pantothenate: step 1/5. Catalyzes the phosphorylation of pantothenate (Pan), the first step in CoA biosynthesis. The chain is Type III pantothenate kinase from Porphyromonas gingivalis (strain ATCC 33277 / DSM 20709 / CIP 103683 / JCM 12257 / NCTC 11834 / 2561).